Consider the following 125-residue polypeptide: Ribosome-binding factor A (125 aa).

The protein belongs to the RbfA family. In terms of assembly, monomer. Binds 30S ribosomal subunits, but not 50S ribosomal subunits or 70S ribosomes.

The protein localises to the cytoplasm. In terms of biological role, one of several proteins that assist in the late maturation steps of the functional core of the 30S ribosomal subunit. Associates with free 30S ribosomal subunits (but not with 30S subunits that are part of 70S ribosomes or polysomes). Required for efficient processing of 16S rRNA. May interact with the 5'-terminal helix region of 16S rRNA. The polypeptide is Ribosome-binding factor A (Desulfitobacterium hafniense (strain DSM 10664 / DCB-2)).